A 229-amino-acid polypeptide reads, in one-letter code: Auxin-responsive protein IAA17 (229 aa).

The EAR-like (transcriptional repression) signature appears at 14–18 (LCLGL). Residues 110-211 (AAFVKVSMDG…TCKRLRLMKG (102 aa)) form the PB1 domain.

It belongs to the Aux/IAA family. Homodimers and heterodimers. Interacts with the auxin response factors ARF1 and IAA24. Interacts with IAA1. Interacts with TPL. Interacts (via PB1 domain) with ARF7 (via PB1 domain). Phosphorylated by phytochrome A in vitro.

The protein localises to the nucleus. Aux/IAA proteins are short-lived transcriptional factors that function as repressors of early auxin response genes at low auxin concentrations. Repression is thought to result from the interaction with auxin response factors (ARFs), proteins that bind to the auxin-responsive promoter element (AuxRE). Formation of heterodimers with ARF proteins may alter their ability to modulate early auxin response genes expression. The polypeptide is Auxin-responsive protein IAA17 (IAA17) (Arabidopsis thaliana (Mouse-ear cress)).